The chain runs to 323 residues: Serine/threonine-protein phosphatase PP1-gamma catalytic subunit (323 aa).

4 residues coordinate Mn(2+): aspartate 64, histidine 66, aspartate 92, and asparagine 124. Catalysis depends on histidine 125, which acts as the Proton donor. Residues histidine 173 and histidine 248 each contribute to the Mn(2+) site. Residues 300–323 (EKKKPNASRPVTPPRGMITKQAKK) are disordered.

Belongs to the PPP phosphatase family. PP-1 subfamily. PP1 comprises a catalytic subunit, ppp1c1, ppp1cb or ppp1cc, which is folded into its native form by inhibitor 2 and glycogen synthetase kinase 3, and then is complexed to one or several targeting or regulatory subunits. Requires Mn(2+) as cofactor.

It localises to the cytoplasm. The protein resides in the nucleus. The protein localises to the cleavage furrow. It is found in the nucleolus. Its subcellular location is the nucleoplasm. It localises to the chromosome. The protein resides in the centromere. The protein localises to the kinetochore. It is found in the nucleus speckle. Its subcellular location is the midbody. It localises to the mitochondrion. The protein resides in the cytoskeleton. The protein localises to the microtubule organizing center. The catalysed reaction is O-phospho-L-seryl-[protein] + H2O = L-seryl-[protein] + phosphate. It catalyses the reaction O-phospho-L-threonyl-[protein] + H2O = L-threonyl-[protein] + phosphate. Functionally, protein phosphatase 1 (PP1) is essential for cell division, and participates in the regulation of glycogen metabolism, muscle contractility and protein synthesis. Promotes nuclear envelope reassembly by targeting nuclear membrane vesicles to chromatin at the end of mitosis. Acts by dephosphorylating membrane proteins such as lamin B receptor (lbr) to regulate the binding of membrane proteins to chromatin. The protein is Serine/threonine-protein phosphatase PP1-gamma catalytic subunit of Xenopus tropicalis (Western clawed frog).